Reading from the N-terminus, the 163-residue chain is Shikimate kinase (163 aa).

10-15 (GVGKSS) serves as a coordination point for ATP. Position 14 (Ser14) interacts with Mg(2+). Substrate contacts are provided by Asp28, Arg52, and Gly75. ATP is bound at residue Arg116. Substrate is bound at residue Arg134. Residue Arg151 coordinates ATP.

This sequence belongs to the shikimate kinase family. Monomer. Mg(2+) serves as cofactor.

Its subcellular location is the cytoplasm. It carries out the reaction shikimate + ATP = 3-phosphoshikimate + ADP + H(+). Its pathway is metabolic intermediate biosynthesis; chorismate biosynthesis; chorismate from D-erythrose 4-phosphate and phosphoenolpyruvate: step 5/7. In terms of biological role, catalyzes the specific phosphorylation of the 3-hydroxyl group of shikimic acid using ATP as a cosubstrate. In Streptococcus thermophilus (strain ATCC BAA-491 / LMD-9), this protein is Shikimate kinase.